Here is a 270-residue protein sequence, read N- to C-terminus: 4-hydroxy-tetrahydrodipicolinate reductase (270 aa).

Position 7–12 (7–12 (GANGRM)) interacts with NAD(+). Arg34 contacts NADP(+). NAD(+) is bound by residues 97 to 99 (GTT) and 121 to 124 (SGNM). Catalysis depends on His155, which acts as the Proton donor/acceptor. His156 is a (S)-2,3,4,5-tetrahydrodipicolinate binding site. Lys159 functions as the Proton donor in the catalytic mechanism. 165–166 (GT) is a (S)-2,3,4,5-tetrahydrodipicolinate binding site.

Belongs to the DapB family.

The protein resides in the cytoplasm. The catalysed reaction is (S)-2,3,4,5-tetrahydrodipicolinate + NAD(+) + H2O = (2S,4S)-4-hydroxy-2,3,4,5-tetrahydrodipicolinate + NADH + H(+). The enzyme catalyses (S)-2,3,4,5-tetrahydrodipicolinate + NADP(+) + H2O = (2S,4S)-4-hydroxy-2,3,4,5-tetrahydrodipicolinate + NADPH + H(+). The protein operates within amino-acid biosynthesis; L-lysine biosynthesis via DAP pathway; (S)-tetrahydrodipicolinate from L-aspartate: step 4/4. Functionally, catalyzes the conversion of 4-hydroxy-tetrahydrodipicolinate (HTPA) to tetrahydrodipicolinate. This Bartonella tribocorum (strain CIP 105476 / IBS 506) protein is 4-hydroxy-tetrahydrodipicolinate reductase.